The following is a 104-amino-acid chain: Co-chaperonin GroES 2 (104 aa).

Belongs to the GroES chaperonin family. Heptamer of 7 subunits arranged in a ring. Interacts with the chaperonin GroEL.

The protein localises to the cytoplasm. Functionally, together with the chaperonin GroEL, plays an essential role in assisting protein folding. The GroEL-GroES system forms a nano-cage that allows encapsulation of the non-native substrate proteins and provides a physical environment optimized to promote and accelerate protein folding. GroES binds to the apical surface of the GroEL ring, thereby capping the opening of the GroEL channel. The chain is Co-chaperonin GroES 2 from Mesorhizobium japonicum (strain LMG 29417 / CECT 9101 / MAFF 303099) (Mesorhizobium loti (strain MAFF 303099)).